A 245-amino-acid chain; its full sequence is Uridylate kinase (245 aa).

16–19 (KLSG) provides a ligand contact to ATP. Positions 24 to 29 (GDNGFG) are involved in allosteric activation by GTP. Glycine 59 provides a ligand contact to UMP. Glycine 60 and arginine 64 together coordinate ATP. Residues aspartate 78 and 139-146 (NGAPFFTT) each bind UMP. ATP-binding residues include asparagine 167, tyrosine 173, and aspartate 176.

This sequence belongs to the UMP kinase family. In terms of assembly, homohexamer.

The protein localises to the cytoplasm. It catalyses the reaction UMP + ATP = UDP + ADP. It participates in pyrimidine metabolism; CTP biosynthesis via de novo pathway; UDP from UMP (UMPK route): step 1/1. Its activity is regulated as follows. Allosterically activated by GTP. Inhibited by UTP. Catalyzes the reversible phosphorylation of UMP to UDP. The protein is Uridylate kinase of Deinococcus radiodurans (strain ATCC 13939 / DSM 20539 / JCM 16871 / CCUG 27074 / LMG 4051 / NBRC 15346 / NCIMB 9279 / VKM B-1422 / R1).